The primary structure comprises 554 residues: Phenylalanine--tRNA ligase beta subunit (554 aa).

Residues 276-351 enclose the B5 domain; sequence LTPKSRMISV…INYGYEKFEG (76 aa). Asp-329, Asp-335, Glu-338, and Glu-339 together coordinate Mg(2+).

It belongs to the phenylalanyl-tRNA synthetase beta subunit family. Type 2 subfamily. As to quaternary structure, tetramer of two alpha and two beta subunits. Mg(2+) serves as cofactor.

Its subcellular location is the cytoplasm. The catalysed reaction is tRNA(Phe) + L-phenylalanine + ATP = L-phenylalanyl-tRNA(Phe) + AMP + diphosphate + H(+). The polypeptide is Phenylalanine--tRNA ligase beta subunit (Methanococcus maripaludis (strain C6 / ATCC BAA-1332)).